Here is a 125-residue protein sequence, read N- to C-terminus: Small ribosomal subunit protein uS12 (125 aa).

A 3-methylthioaspartic acid modification is found at aspartate 89. The interval 106-125 (GVKDRKQSRSKYGAKRPKKA) is disordered. A compositionally biased stretch (basic residues) spans 113-125 (SRSKYGAKRPKKA).

It belongs to the universal ribosomal protein uS12 family. In terms of assembly, part of the 30S ribosomal subunit. Contacts proteins S8 and S17. May interact with IF1 in the 30S initiation complex.

With S4 and S5 plays an important role in translational accuracy. Its function is as follows. Interacts with and stabilizes bases of the 16S rRNA that are involved in tRNA selection in the A site and with the mRNA backbone. Located at the interface of the 30S and 50S subunits, it traverses the body of the 30S subunit contacting proteins on the other side and probably holding the rRNA structure together. The combined cluster of proteins S8, S12 and S17 appears to hold together the shoulder and platform of the 30S subunit. The polypeptide is Small ribosomal subunit protein uS12 (Aromatoleum aromaticum (strain DSM 19018 / LMG 30748 / EbN1) (Azoarcus sp. (strain EbN1))).